We begin with the raw amino-acid sequence, 360 residues long: uncharacterized protein (360 aa).

The ABC transporter domain occupies 4-235 (LSLQHIQKIY…PANMFVSGFI (232 aa)). 37 to 44 (GPSGCGKS) provides a ligand contact to ATP.

Belongs to the ABC transporter superfamily.

This is an uncharacterized protein from Escherichia coli (strain K12).